Reading from the N-terminus, the 119-residue chain is Membrane-anchored ubiquitin-fold protein 6 (119 aa).

One can recognise a Ubiquitin-like domain in the interval Ile8–Leu76. A lipid anchor (S-palmitoyl cysteine) is attached at Cys114. A Cysteine methyl ester modification is found at Cys116. Residue Cys116 is the site of S-geranylgeranyl cysteine attachment. The propeptide at Thr117–Leu119 is removed in mature form.

As to expression, ubiquitous.

Its subcellular location is the cell membrane. In terms of biological role, may serve as docking site to facilitate the association of other proteins to the plasma membrane. This chain is Membrane-anchored ubiquitin-fold protein 6 (MUB6), found in Arabidopsis thaliana (Mouse-ear cress).